The sequence spans 100 residues: uncharacterized protein (100 aa).

3 consecutive transmembrane segments (helical) span residues 9–29 (VYTYILSAVIYSQDLFPSWVV), 41–61 (PYLIHGNSFLFQILQVLITAP), and 72–92 (SIPFIFLALLLSQDFHVFLGI).

It is found in the membrane. This is an uncharacterized protein from Saccharomyces cerevisiae (strain ATCC 204508 / S288c) (Baker's yeast).